Consider the following 342-residue polypeptide: Putative gluconeogenesis factor (342 aa).

The tract at residues 318–342 (SEPPVAATQEIPIDGGRPRGDDAWR) is disordered. Residue Thr325 is modified to Phosphothreonine. Residues 333–342 (GRPRGDDAWR) show a composition bias toward basic and acidic residues.

This sequence belongs to the gluconeogenesis factor family. In terms of processing, phosphorylated by PknA and/or PknB.

It is found in the cytoplasm. Required for morphogenesis under gluconeogenic growth conditions. The protein is Putative gluconeogenesis factor of Mycobacterium tuberculosis (strain CDC 1551 / Oshkosh).